The following is a 312-amino-acid chain: Pantothenate kinase (312 aa).

Residue 97-104 (GSVAVGKS) participates in ATP binding.

Belongs to the prokaryotic pantothenate kinase family.

The protein resides in the cytoplasm. The catalysed reaction is (R)-pantothenate + ATP = (R)-4'-phosphopantothenate + ADP + H(+). It participates in cofactor biosynthesis; coenzyme A biosynthesis; CoA from (R)-pantothenate: step 1/5. The chain is Pantothenate kinase from Mycolicibacterium vanbaalenii (strain DSM 7251 / JCM 13017 / BCRC 16820 / KCTC 9966 / NRRL B-24157 / PYR-1) (Mycobacterium vanbaalenii).